Here is a 373-residue protein sequence, read N- to C-terminus: Transcription factor bHLH87 (373 aa).

The segment at 127 to 227 (SAESENREIT…GGSSNISFQH (101 aa)) is disordered. Residues 188 to 218 (PQDDSEKGGFKLIYDENQSKSKKPRTEKERG) show a composition bias toward basic and acidic residues. Residues 275-324 (ISTDPQTVAARQRRERISEKIRVLQTLVPGGTKMDTASMLDEAANYLKFL) enclose the bHLH domain.

As to quaternary structure, homodimer. In terms of tissue distribution, flowers.

It localises to the nucleus. The protein is Transcription factor bHLH87 (BHLH87) of Arabidopsis thaliana (Mouse-ear cress).